We begin with the raw amino-acid sequence, 37 residues long: Large ribosomal subunit protein bL36 (37 aa).

This sequence belongs to the bacterial ribosomal protein bL36 family.

This is Large ribosomal subunit protein bL36 from Bordetella bronchiseptica (strain ATCC BAA-588 / NCTC 13252 / RB50) (Alcaligenes bronchisepticus).